Here is a 340-residue protein sequence, read N- to C-terminus: Phosphoribosylformylglycinamidine cyclo-ligase (340 aa).

The protein belongs to the AIR synthase family.

The protein localises to the cytoplasm. It carries out the reaction 2-formamido-N(1)-(5-O-phospho-beta-D-ribosyl)acetamidine + ATP = 5-amino-1-(5-phospho-beta-D-ribosyl)imidazole + ADP + phosphate + H(+). It participates in purine metabolism; IMP biosynthesis via de novo pathway; 5-amino-1-(5-phospho-D-ribosyl)imidazole from N(2)-formyl-N(1)-(5-phospho-D-ribosyl)glycinamide: step 2/2. This is Phosphoribosylformylglycinamidine cyclo-ligase from Streptococcus pneumoniae serotype 4 (strain ATCC BAA-334 / TIGR4).